We begin with the raw amino-acid sequence, 992 residues long: Aminopeptidase Q (992 aa).

Residues 2–13 (GPPSSSGFYVSR) lie on the Cytoplasmic side of the membrane. The helical; Signal-anchor for type II membrane protein transmembrane segment at 14–34 (AVALLLAALAAALLLALAVLA) threads the bilayer. Residues 35 to 992 (ALYGRCARVQ…RMTAWLRKNT (958 aa)) lie on the Extracellular side of the membrane. Positions 47 to 92 (DLHHSGVPDAASSPRGTQEEPLPTWPPRPTREPAGTATPGHWRPPG) are disordered. Asn133 carries an N-linked (GlcNAc...) asparagine glycan. Residue Glu241 coordinates substrate. Residues Asn262, Asn289, Asn347, and Asn361 are each glycosylated (N-linked (GlcNAc...) asparagine). Position 380–384 (380–384 (SAMEN)) interacts with substrate. His416 provides a ligand contact to Zn(2+). Glu417 acts as the Proton acceptor in catalysis. His420 and Glu439 together coordinate Zn(2+). The Proton donor role is filled by Tyr505. N-linked (GlcNAc...) asparagine glycosylation is found at Asn555, Asn584, Asn602, Asn609, Asn655, Asn811, Asn850, and Asn889.

It belongs to the peptidase M1 family. Zn(2+) serves as cofactor. As to expression, expressed in skin. Expression levels do not differ between dark and light skin areas.

It is found in the membrane. Its function is as follows. Metalloprotease which may be important for placentation by regulating biological activity of key peptides at the embryo-maternal interface. Involved in coat pigmentation patterns. During skin development, may be required to establish the periodicity of tabby markings, initiating a pre-pattern at or before hair follicle development. In Felis catus (Cat), this protein is Aminopeptidase Q (LVRN).